We begin with the raw amino-acid sequence, 93 residues long: UPF0367 protein gsr3177 (93 aa).

Belongs to the UPF0367 family.

This Gloeobacter violaceus (strain ATCC 29082 / PCC 7421) protein is UPF0367 protein gsr3177.